The chain runs to 978 residues: Regulator of telomere elongation helicase 1 homolog (978 aa).

A Helicase ATP-binding domain is found at 7-318 (NGIPVNFPFE…EDDDAKKDFT (312 aa)). An ATP-binding site is contributed by 42 to 49 (SPTGTGKT). Positions 159, 177, 186, and 222 each coordinate [4Fe-4S] cluster. Positions 265-268 (DEAH) match the DEAH box motif.

It belongs to the helicase family. RAD3/XPD subfamily.

It localises to the nucleus. The catalysed reaction is ATP + H2O = ADP + phosphate + H(+). A probable ATP-dependent DNA helicase implicated in DNA repair and the maintenance of genomic stability. Acts as an anti-recombinase to counteract toxic recombination and limit crossover during meiosis. Regulates meiotic recombination and crossover homeostasis by physically dissociating strand invasion events and thereby promotes noncrossover repair by meiotic synthesis dependent strand annealing (SDSA) as well as disassembly of D loop recombination intermediates. The protein is Regulator of telomere elongation helicase 1 homolog of Culex quinquefasciatus (Southern house mosquito).